The primary structure comprises 146 residues: Acidic phospholipase A2 S5-32M (146 aa).

Residues 1–19 (MYPAHLLVLLAVCVSLLGA) form the signal peptide. Residues 20 to 27 (ASIPPQPL) constitute a propeptide that is removed on maturation. Intrachain disulfides connect C38/C98, C54/C145, C56/C72, C71/C126, C78/C119, C87/C112, and C105/C117. Residues Y55, G57, and G59 each contribute to the Ca(2+) site. H75 is an active-site residue. D76 contacts Ca(2+). D120 is an active-site residue.

It belongs to the phospholipase A2 family. Group I subfamily. D49 sub-subfamily. The cofactor is Ca(2+). In terms of tissue distribution, expressed by the venom gland.

It is found in the secreted. The catalysed reaction is a 1,2-diacyl-sn-glycero-3-phosphocholine + H2O = a 1-acyl-sn-glycero-3-phosphocholine + a fatty acid + H(+). Its function is as follows. Snake venom phospholipase A2 (PLA2) that inhibits collagen-induced platelet aggregation. PLA2 catalyzes the calcium-dependent hydrolysis of the 2-acyl groups in 3-sn-phosphoglycerides. The chain is Acidic phospholipase A2 S5-32M from Austrelaps superbus (Lowland copperhead snake).